The sequence spans 638 residues: 1-deoxy-D-xylulose-5-phosphate synthase (638 aa).

Residues H76 and A117–S119 each bind thiamine diphosphate. D148 is a Mg(2+) binding site. Thiamine diphosphate contacts are provided by residues G149–S150, N177, Y287, and E369. N177 lines the Mg(2+) pocket.

Belongs to the transketolase family. DXPS subfamily. In terms of assembly, homodimer. Mg(2+) is required as a cofactor. The cofactor is thiamine diphosphate.

The catalysed reaction is D-glyceraldehyde 3-phosphate + pyruvate + H(+) = 1-deoxy-D-xylulose 5-phosphate + CO2. It functions in the pathway metabolic intermediate biosynthesis; 1-deoxy-D-xylulose 5-phosphate biosynthesis; 1-deoxy-D-xylulose 5-phosphate from D-glyceraldehyde 3-phosphate and pyruvate: step 1/1. In terms of biological role, catalyzes the acyloin condensation reaction between C atoms 2 and 3 of pyruvate and glyceraldehyde 3-phosphate to yield 1-deoxy-D-xylulose-5-phosphate (DXP). This is 1-deoxy-D-xylulose-5-phosphate synthase from Rhodopseudomonas palustris (strain BisB5).